We begin with the raw amino-acid sequence, 89 residues long: Small ribosomal subunit protein bS20 (89 aa).

The segment at 68-89 (PNKGARKSSRLDHFVNEQKSKQ) is disordered. A compositionally biased stretch (basic and acidic residues) spans 76-89 (SRLDHFVNEQKSKQ).

It belongs to the bacterial ribosomal protein bS20 family.

Binds directly to 16S ribosomal RNA. This Mycoplasmopsis agalactiae (strain NCTC 10123 / CIP 59.7 / PG2) (Mycoplasma agalactiae) protein is Small ribosomal subunit protein bS20.